Consider the following 366-residue polypeptide: Neutral protease 2 homolog BDBG_02110 (366 aa).

Positions 1 to 19 (MQLSSVLLTAAGLLAPVYS) are cleaved as a signal peptide. Residues 23–184 (ISIGRRSEGL…RAKIHDHLAQ (162 aa)) constitute a propeptide that is removed on maturation. Asn-123 and Asn-192 each carry an N-linked (GlcNAc...) asparagine glycan. Cysteines 272 and 290 form a disulfide. Zn(2+) is bound at residue His-314. Glu-315 is a catalytic residue. Zn(2+) is bound at residue His-318.

The protein belongs to the peptidase M35 family. Requires Zn(2+) as cofactor.

Its subcellular location is the secreted. The catalysed reaction is Preferential cleavage of bonds with hydrophobic residues in P1'. Also 3-Asn-|-Gln-4 and 8-Gly-|-Ser-9 bonds in insulin B chain.. In terms of biological role, secreted metalloproteinase that allows assimilation of proteinaceous substrates. Shows high activities on basic nuclear substrates such as histone and protamine. This chain is Neutral protease 2 homolog BDBG_02110, found in Blastomyces gilchristii (strain SLH14081) (Blastomyces dermatitidis).